Here is a 297-residue protein sequence, read N- to C-terminus: MATLLSARRASWRDYLELTKPKVVVLMLITSLAGMFLATRAGVSWSVLLFGNLGIGLCAGGAAVVNHVVDRRIDALMARTHKRPLAQGRVEPLPALLFALALALLGMALLLAFTNALTAWLTLASLLGYAVLYTGFLKRATPQNIVIGGLAGAAPPLLGWVAVSGHVSAEPLLLVLIIFAWTPPHFWALAIHRKEEYAKADIPMLPVTHGERYTKLHILLYTLILLAVSLLPYAIHMSGPLYLACALVLGLRFLQWAWVLYRGSRPHAAIGTFKYSIAYLFALFIALLLDHYLLLNL.

A run of 9 helical transmembrane segments spans residues 23-43 (VVVL…RAGV), 45-65 (WSVL…AAVV), 93-113 (LPAL…LLAF), 117-137 (LTAW…TGFL), 145-165 (IVIG…AVSG), 171-191 (PLLL…ALAI), 216-236 (LHIL…YAIH), 241-261 (LYLA…WVLY), and 277-297 (IAYL…LLNL).

Belongs to the UbiA prenyltransferase family. Protoheme IX farnesyltransferase subfamily.

It localises to the cell inner membrane. The catalysed reaction is heme b + (2E,6E)-farnesyl diphosphate + H2O = Fe(II)-heme o + diphosphate. It participates in porphyrin-containing compound metabolism; heme O biosynthesis; heme O from protoheme: step 1/1. Its function is as follows. Converts heme B (protoheme IX) to heme O by substitution of the vinyl group on carbon 2 of heme B porphyrin ring with a hydroxyethyl farnesyl side group. In Pseudomonas putida (strain GB-1), this protein is Protoheme IX farnesyltransferase 1.